A 203-amino-acid chain; its full sequence is FMN-dependent NADH:quinone oxidoreductase (203 aa).

Residues Ser9, 15 to 17 (SVS), and 138 to 141 (SRGG) each bind FMN.

The protein belongs to the azoreductase type 1 family. In terms of assembly, homodimer. The cofactor is FMN.

The enzyme catalyses 2 a quinone + NADH + H(+) = 2 a 1,4-benzosemiquinone + NAD(+). The catalysed reaction is N,N-dimethyl-1,4-phenylenediamine + anthranilate + 2 NAD(+) = 2-(4-dimethylaminophenyl)diazenylbenzoate + 2 NADH + 2 H(+). In terms of biological role, quinone reductase that provides resistance to thiol-specific stress caused by electrophilic quinones. Functionally, also exhibits azoreductase activity. Catalyzes the reductive cleavage of the azo bond in aromatic azo compounds to the corresponding amines. The protein is FMN-dependent NADH:quinone oxidoreductase of Methylorubrum extorquens (strain CM4 / NCIMB 13688) (Methylobacterium extorquens).